We begin with the raw amino-acid sequence, 47 residues long: Defensin Ec-AMP-D1 (47 aa).

Disulfide bonds link C3–C47, C14–C34, C20–C41, and C24–C43.

Its function is as follows. Has antifungal activity. Inhibits spore germination in F.graminearum (IC(50)=15 ug/ml), F.oxysporum (IC(50)=102 ug/ml), F.verticillioides (IC(50)=8.5 ug/ml) and D.maydis (IC(50)=12.5 ug/ml), but not in C.graminicola, B.cinerea and H.sativum at concentrations below 30 ug/ml. Inhibits hyphal development in P.infestans (IC(50)=25.5 ug/ml), but not release of zoospores. At concentrations above 100 ug/ml, induces morphological changes such as lysis of hyphae and sporangia in P.infestans. In Echinochloa crus-galli (Barnyard grass), this protein is Defensin Ec-AMP-D1.